The chain runs to 264 residues: Shikimate dehydrogenase (NADP(+)) (264 aa).

Shikimate is bound by residues 14 to 16 (SVS) and threonine 61. Lysine 65 serves as the catalytic Proton acceptor. The shikimate site is built by asparagine 85 and aspartate 99. Residues 122-126 (GAGGA), 145-150 (NRTVSR), and alanine 208 each bind NADP(+). Tyrosine 210 contributes to the shikimate binding site. Residue glycine 231 coordinates NADP(+).

It belongs to the shikimate dehydrogenase family. Homodimer.

The catalysed reaction is shikimate + NADP(+) = 3-dehydroshikimate + NADPH + H(+). It functions in the pathway metabolic intermediate biosynthesis; chorismate biosynthesis; chorismate from D-erythrose 4-phosphate and phosphoenolpyruvate: step 4/7. Functionally, involved in the biosynthesis of the chorismate, which leads to the biosynthesis of aromatic amino acids. Catalyzes the reversible NADPH linked reduction of 3-dehydroshikimate (DHSA) to yield shikimate (SA). In Natronomonas pharaonis (strain ATCC 35678 / DSM 2160 / CIP 103997 / JCM 8858 / NBRC 14720 / NCIMB 2260 / Gabara) (Halobacterium pharaonis), this protein is Shikimate dehydrogenase (NADP(+)).